The primary structure comprises 308 residues: Elongation factor Ts (308 aa).

The interval 79-82 is involved in Mg(2+) ion dislocation from EF-Tu; the sequence is TDFV.

This sequence belongs to the EF-Ts family.

It is found in the cytoplasm. Its function is as follows. Associates with the EF-Tu.GDP complex and induces the exchange of GDP to GTP. It remains bound to the aminoacyl-tRNA.EF-Tu.GTP complex up to the GTP hydrolysis stage on the ribosome. This chain is Elongation factor Ts, found in Bdellovibrio bacteriovorus (strain ATCC 15356 / DSM 50701 / NCIMB 9529 / HD100).